The sequence spans 445 residues: GTPase Der (445 aa).

EngA-type G domains lie at 3–167 and 180–353; these read PVIA…YAGQ and IKIA…AAAM. Residues 9–16, 56–60, 119–122, 186–193, 233–237, and 298–301 contribute to the GTP site; these read GRPNVGKS, DTGGF, NKAE, DTAGL, and NKWD. The 85-residue stretch at 354–438 folds into the KH-like domain; sequence AKLPTPKLTR…PLRIEFRSSN (85 aa).

The protein belongs to the TRAFAC class TrmE-Era-EngA-EngB-Septin-like GTPase superfamily. EngA (Der) GTPase family. Associates with the 50S ribosomal subunit.

In terms of biological role, GTPase that plays an essential role in the late steps of ribosome biogenesis. The polypeptide is GTPase Der (Burkholderia ambifaria (strain ATCC BAA-244 / DSM 16087 / CCUG 44356 / LMG 19182 / AMMD) (Burkholderia cepacia (strain AMMD))).